Reading from the N-terminus, the 457-residue chain is Chromosomal replication initiator protein DnaA (457 aa).

Residues 1-75 (MDAQLNNLWE…ALKIVTSRKF (75 aa)) are domain I, interacts with DnaA modulators. Residues 75–118 (FKIEFYLESDLEEEKENEEKQKEEKKENTNDVDGSIVVSDEMSA) form a domain II region. Positions 119–335 (TLNPKYTFQS…GALIRIIAYS (217 aa)) are domain III, AAA+ region. Residues Gly-163, Gly-165, Lys-166, and Thr-167 each coordinate ATP. The segment at 336 to 457 (SLTNRDVSVD…NDITKKLTQK (122 aa)) is domain IV, binds dsDNA.

Belongs to the DnaA family. In terms of assembly, oligomerizes as a right-handed, spiral filament on DNA at oriC.

It is found in the cytoplasm. Plays an essential role in the initiation and regulation of chromosomal replication. ATP-DnaA binds to the origin of replication (oriC) to initiate formation of the DNA replication initiation complex once per cell cycle. Binds the DnaA box (a 9 base pair repeat at the origin) and separates the double-stranded (ds)DNA. Forms a right-handed helical filament on oriC DNA; dsDNA binds to the exterior of the filament while single-stranded (ss)DNA is stabiized in the filament's interior. The ATP-DnaA-oriC complex binds and stabilizes one strand of the AT-rich DNA unwinding element (DUE), permitting loading of DNA polymerase. After initiation quickly degrades to an ADP-DnaA complex that is not apt for DNA replication. Binds acidic phospholipids. The sequence is that of Chromosomal replication initiator protein DnaA from Clostridium perfringens (strain ATCC 13124 / DSM 756 / JCM 1290 / NCIMB 6125 / NCTC 8237 / Type A).